A 245-amino-acid chain; its full sequence is Geranylgeranylglyceryl phosphate synthase (245 aa).

Mg(2+)-binding residues include D22 and S51. Residues 169 to 175 (YLEAGSG), 200 to 201 (GG), and 222 to 223 (GT) each bind sn-glycerol 1-phosphate.

The protein belongs to the GGGP/HepGP synthase family. Group II subfamily. In terms of assembly, homopentamer. It depends on Mg(2+) as a cofactor.

Its subcellular location is the cytoplasm. The catalysed reaction is sn-glycerol 1-phosphate + (2E,6E,10E)-geranylgeranyl diphosphate = sn-3-O-(geranylgeranyl)glycerol 1-phosphate + diphosphate. It functions in the pathway membrane lipid metabolism; glycerophospholipid metabolism. Its activity is regulated as follows. Inhibited by EDTA in vitro. In terms of biological role, prenyltransferase that catalyzes the transfer of the geranylgeranyl moiety of geranylgeranyl diphosphate (GGPP) to the C3 hydroxyl of sn-glycerol-1-phosphate (G1P). This reaction is the first ether-bond-formation step in the biosynthesis of archaeal membrane lipids. Cannot use sn-glycerol-3-phosphate (G3P) or dihydroxyacetonephosphate (DHAP) as substrate. This is Geranylgeranylglyceryl phosphate synthase from Methanothermobacter marburgensis (strain ATCC BAA-927 / DSM 2133 / JCM 14651 / NBRC 100331 / OCM 82 / Marburg) (Methanobacterium thermoautotrophicum).